Reading from the N-terminus, the 573-residue chain is Protein translocase subunit SecD (573 aa).

The helical transmembrane segment at 13–33 threads the bilayer; sequence YLSVFLVMLIGIYLLVFFTGD. Residues 127-200 form a disordered region; the sequence is AQPAAEEPQP…PPAEAPATDP (74 aa). Pro residues-rich tracts occupy residues 135–154 and 161–194; these read QPAP…PPPA and SPQP…PPAE. 5 helical membrane-spanning segments follow: residues 385–405, 410–430, 441–461, 489–509, and 514–534; these read AGMI…LLYY, LLTA…LVLL, AGIA…VVFF, IVSG…LAIG, and FAFT…LVTW.

This sequence belongs to the SecD/SecF family. SecD subfamily. As to quaternary structure, forms a complex with SecF. Part of the essential Sec protein translocation apparatus which comprises SecA, SecYEG and auxiliary proteins SecDF. Other proteins may also be involved.

It localises to the cell membrane. In terms of biological role, part of the Sec protein translocase complex. Interacts with the SecYEG preprotein conducting channel. SecDF uses the proton motive force (PMF) to complete protein translocation after the ATP-dependent function of SecA. The chain is Protein translocase subunit SecD from Mycobacterium tuberculosis (strain CDC 1551 / Oshkosh).